The sequence spans 874 residues: Alanine--tRNA ligase (874 aa).

His563, His567, Cys665, and His669 together coordinate Zn(2+).

It belongs to the class-II aminoacyl-tRNA synthetase family. It depends on Zn(2+) as a cofactor.

It is found in the cytoplasm. It carries out the reaction tRNA(Ala) + L-alanine + ATP = L-alanyl-tRNA(Ala) + AMP + diphosphate. Its function is as follows. Catalyzes the attachment of alanine to tRNA(Ala) in a two-step reaction: alanine is first activated by ATP to form Ala-AMP and then transferred to the acceptor end of tRNA(Ala). Also edits incorrectly charged Ser-tRNA(Ala) and Gly-tRNA(Ala) via its editing domain. The protein is Alanine--tRNA ligase of Haemophilus ducreyi (strain 35000HP / ATCC 700724).